The chain runs to 222 residues: Eukaryotic translation initiation factor 3 subunit K (222 aa).

The PCI domain maps to 46 to 208 (YDLEANLAVL…KIKTKNITEK (163 aa)).

The protein belongs to the eIF-3 subunit K family. Component of the eukaryotic translation initiation factor 3 (eIF-3) complex. The eIF-3 complex interacts with pix.

The protein localises to the cytoplasm. Its function is as follows. Component of the eukaryotic translation initiation factor 3 (eIF-3) complex, which is involved in protein synthesis of a specialized repertoire of mRNAs and, together with other initiation factors, stimulates binding of mRNA and methionyl-tRNAi to the 40S ribosome. The eIF-3 complex specifically targets and initiates translation of a subset of mRNAs involved in cell proliferation. In Drosophila erecta (Fruit fly), this protein is Eukaryotic translation initiation factor 3 subunit K.